Reading from the N-terminus, the 82-residue chain is Acyl carrier protein (82 aa).

A Carrier domain is found at 4–79; the sequence is PEMESRLKKI…DALNYIEQKL (76 aa). An O-(pantetheine 4'-phosphoryl)serine modification is found at Ser39.

It belongs to the acyl carrier protein (ACP) family. In terms of processing, 4'-phosphopantetheine is transferred from CoA to a specific serine of apo-ACP by AcpS. This modification is essential for activity because fatty acids are bound in thioester linkage to the sulfhydryl of the prosthetic group.

The protein resides in the cytoplasm. It participates in lipid metabolism; fatty acid biosynthesis. Carrier of the growing fatty acid chain in fatty acid biosynthesis. The chain is Acyl carrier protein from Roseiflexus sp. (strain RS-1).